The following is a 281-amino-acid chain: Urease accessory protein UreD (281 aa).

It belongs to the UreD family. As to quaternary structure, ureD, UreF and UreG form a complex that acts as a GTP-hydrolysis-dependent molecular chaperone, activating the urease apoprotein by helping to assemble the nickel containing metallocenter of UreC. The UreE protein probably delivers the nickel.

The protein resides in the cytoplasm. Its function is as follows. Required for maturation of urease via the functional incorporation of the urease nickel metallocenter. In Pseudomonas savastanoi pv. phaseolicola (strain 1448A / Race 6) (Pseudomonas syringae pv. phaseolicola (strain 1448A / Race 6)), this protein is Urease accessory protein UreD.